The sequence spans 1087 residues: Transcription factor AP2-Z (1087 aa).

A DNA-binding region (AP2) is located at residues 586 to 682 (GRVYKVIVRG…IKYNSVPDSL (97 aa)).

It belongs to the AP2/ERF transcription factor family. AP2 subfamily.

The protein resides in the nucleus. Its subcellular location is the chromosome. Its function is as follows. Transcription factor which binds the 5'-[TC][AC]TG[AT]AC[AG]-3' motif. During the mosquito vector stage, plays an essential role in the zygote for de novo transcription of genes required for ookinete formation. This is Transcription factor AP2-Z from Plasmodium berghei (strain Anka).